The primary structure comprises 192 residues: Protein FAM169BP (192 aa).

Residues 121–192 are disordered; sequence YQAHPGNSED…PPGKLTRSSP (72 aa). Positions 159-177 are enriched in acidic residues; it reads EELEDTKDDPECGVEEEDA.

It belongs to the FAM169 family.

In Homo sapiens (Human), this protein is Protein FAM169BP.